We begin with the raw amino-acid sequence, 274 residues long: MGTLTVNQNKLQKRLRRLAGEAVTDFNMIEDGDKVMVCLSGGKDSYTMLDVLMHLQKVAPIKFEIVAVNMDQKQPGFPEHVLPAYLKELGIEYHIVEKDTYSVVKELIPEGKTTCSLCSRLRRGTLYTFADEIGATKMALGHHRDDIVETFFLNMFFNGSLKAMPPKLRADDGRNVVIRPLAYCNEKDIQAYSDFKQFPIIPCNLCGSQENLQRQVVKEMLQDWERKTPGRTESIFRSLQNVIPSQLADRNLFDFTSLKIDETAASRFVNVVNL.

The PP-loop motif motif lies at 40 to 45 (SGGKDS). The [4Fe-4S] cluster site is built by cysteine 115, cysteine 118, and cysteine 206.

The protein belongs to the TtcA family. Homodimer. The cofactor is Mg(2+). [4Fe-4S] cluster is required as a cofactor.

Its subcellular location is the cytoplasm. The enzyme catalyses cytidine(32) in tRNA + S-sulfanyl-L-cysteinyl-[cysteine desulfurase] + AH2 + ATP = 2-thiocytidine(32) in tRNA + L-cysteinyl-[cysteine desulfurase] + A + AMP + diphosphate + H(+). It functions in the pathway tRNA modification. Its function is as follows. Catalyzes the ATP-dependent 2-thiolation of cytidine in position 32 of tRNA, to form 2-thiocytidine (s(2)C32). The sulfur atoms are provided by the cysteine/cysteine desulfurase (IscS) system. In Pseudomonas fluorescens (strain Pf0-1), this protein is tRNA-cytidine(32) 2-sulfurtransferase.